The chain runs to 315 residues: Protoheme IX farnesyltransferase 1 (315 aa).

9 helical membrane-spanning segments follow: residues 25 to 45, 49 to 69, 87 to 107, 120 to 139, 145 to 165, 176 to 196, 220 to 240, 242 to 262, and 280 to 300; these read PGIIFGNLISVAGGFLLAAKG, LALMLASLVGLSLVVASGCAV, RVTVTGEIAVGNVLAFGLALG, ALALLFAVIGYIVYVGVYSL, SVYGTLVGSFSGAVPPVVGYC, AILLLMFSLWQMPHSYAIAIF, LHIVLYIAVFALVSALLPLAG, TGIAFMAVTCATSLWWLAMAL, and GFSIITIMALSITMALDSQVI.

Belongs to the UbiA prenyltransferase family. Protoheme IX farnesyltransferase subfamily.

The protein resides in the cell inner membrane. The catalysed reaction is heme b + (2E,6E)-farnesyl diphosphate + H2O = Fe(II)-heme o + diphosphate. It functions in the pathway porphyrin-containing compound metabolism; heme O biosynthesis; heme O from protoheme: step 1/1. Functionally, converts heme B (protoheme IX) to heme O by substitution of the vinyl group on carbon 2 of heme B porphyrin ring with a hydroxyethyl farnesyl side group. In Shewanella sp. (strain W3-18-1), this protein is Protoheme IX farnesyltransferase 1.